We begin with the raw amino-acid sequence, 186 residues long: MSKTDWNASGLSRPSPSAHWPSRKPWQHGQKYQTTQDRTEPPARKRRQAVRVSANHASQQLDQLKAVHLASAVRDLEKAMTTLKLWESPQEISRHQALGYSVIMFMITAVKRLRESKMLTLSWFNQALMVIAPSQEETMNLKTAMWILANLIPRDMLSLTGDLLPSLWGSGLLMLKLQKEGRSTSS.

Positions 1-15 (MSKTDWNASGLSRPS) are enriched in polar residues. The tract at residues 1–45 (MSKTDWNASGLSRPSPSAHWPSRKPWQHGQKYQTTQDRTEPPARK) is disordered.

This sequence belongs to the morbillivirus protein C family. In terms of assembly, interacts with the phosphoprotein (via C-terminus); this interaction allows C to associate with the ribonucleocapsid.

The protein localises to the host nucleus. It localises to the host cytoplasmic vesicle. In terms of biological role, ribonucleocapsid-associated protein that interacts with the phosphoprotein (P), thereby increasing replication accuracy and processivity of the polymerase complex. In Homo sapiens (Human), this protein is Protein C (P/V/C).